The sequence spans 229 residues: 2,3-bisphosphoglycerate-dependent phosphoglycerate mutase (229 aa).

Substrate contacts are provided by residues 8-15 (RHGKSEWN), 21-22 (TG), R60, 87-90 (ERHY), K98, 114-115 (RR), and 183-184 (GN). The Tele-phosphohistidine intermediate role is filled by H9. E87 functions as the Proton donor/acceptor in the catalytic mechanism.

The protein belongs to the phosphoglycerate mutase family. BPG-dependent PGAM subfamily. In terms of assembly, homodimer.

It catalyses the reaction (2R)-2-phosphoglycerate = (2R)-3-phosphoglycerate. It participates in carbohydrate degradation; glycolysis; pyruvate from D-glyceraldehyde 3-phosphate: step 3/5. Its function is as follows. Catalyzes the interconversion of 2-phosphoglycerate and 3-phosphoglycerate. The chain is 2,3-bisphosphoglycerate-dependent phosphoglycerate mutase from Nautilia profundicola (strain ATCC BAA-1463 / DSM 18972 / AmH).